A 252-amino-acid chain; its full sequence is Phosphoglycolate phosphatase (252 aa).

D13 serves as the catalytic Nucleophile. 3 residues coordinate Mg(2+): D13, D15, and D192.

It belongs to the HAD-like hydrolase superfamily. CbbY/CbbZ/Gph/YieH family. Monomer. Mg(2+) is required as a cofactor. It depends on chloride as a cofactor.

It carries out the reaction 2-phosphoglycolate + H2O = glycolate + phosphate. Its pathway is organic acid metabolism; glycolate biosynthesis; glycolate from 2-phosphoglycolate: step 1/1. Specifically catalyzes the dephosphorylation of 2-phosphoglycolate. Is involved in the dissimilation of the intracellular 2-phosphoglycolate formed during the DNA repair of 3'-phosphoglycolate ends, a major class of DNA lesions induced by oxidative stress. The polypeptide is Phosphoglycolate phosphatase (Escherichia coli O157:H7).